We begin with the raw amino-acid sequence, 476 residues long: Nuclear envelope morphology protein 1 (476 aa).

The segment at 47 to 74 (RRRSSYSASSLSSLSSKPTEKEVPTRNE) is disordered. Residues 51 to 62 (SYSASSLSSLSS) show a composition bias toward low complexity. Basic and acidic residues predominate over residues 64–74 (PTEKEVPTRNE). The helical transmembrane segment at 123–139 (FFWGLCRFVFFPVLLSY) threads the bilayer. Disordered regions lie at residues 164 to 190 (SSHQ…SNGN) and 232 to 256 (GKAN…PAND). Residues 234-256 (ANSNRSGHSHQPQSTQFSPPAND) are compositionally biased toward polar residues. 4 N-linked (GlcNAc...) asparagine glycosylation sites follow: N237, N257, N284, and N356. The FCP1 homology domain maps to 299-460 (SKLPRKTLVL…LNLLSFLHAL (162 aa)).

Belongs to the Dullard family. Component of the nem1-spo7 complex.

The protein localises to the endoplasmic reticulum membrane. Its subcellular location is the nucleus membrane. The catalysed reaction is O-phospho-L-seryl-[protein] + H2O = L-seryl-[protein] + phosphate. It catalyses the reaction O-phospho-L-threonyl-[protein] + H2O = L-threonyl-[protein] + phosphate. Functionally, catalytic component of the nem1-spo7 complex which acts as a phosphatase and may be required for proper nuclear membrane morphology. The protein is Nuclear envelope morphology protein 1 (nem1) of Schizosaccharomyces pombe (strain 972 / ATCC 24843) (Fission yeast).